Reading from the N-terminus, the 413-residue chain is Multifunctional CCA protein (413 aa).

Positions 8 and 11 each coordinate ATP. CTP contacts are provided by G8 and R11. Mg(2+) contacts are provided by D21 and D23. ATP contacts are provided by R91, R137, and R140. CTP is bound by residues R91, R137, and R140. Residues 228-329 (TGKHTLLSLK…VSLFDKGDFW (102 aa)) enclose the HD domain.

Belongs to the tRNA nucleotidyltransferase/poly(A) polymerase family. Bacterial CCA-adding enzyme type 1 subfamily. As to quaternary structure, monomer. Can also form homodimers and oligomers. It depends on Mg(2+) as a cofactor. The cofactor is Ni(2+).

It carries out the reaction a tRNA precursor + 2 CTP + ATP = a tRNA with a 3' CCA end + 3 diphosphate. It catalyses the reaction a tRNA with a 3' CCA end + 2 CTP + ATP = a tRNA with a 3' CCACCA end + 3 diphosphate. In terms of biological role, catalyzes the addition and repair of the essential 3'-terminal CCA sequence in tRNAs without using a nucleic acid template. Adds these three nucleotides in the order of C, C, and A to the tRNA nucleotide-73, using CTP and ATP as substrates and producing inorganic pyrophosphate. tRNA 3'-terminal CCA addition is required both for tRNA processing and repair. Also involved in tRNA surveillance by mediating tandem CCA addition to generate a CCACCA at the 3' terminus of unstable tRNAs. While stable tRNAs receive only 3'-terminal CCA, unstable tRNAs are marked with CCACCA and rapidly degraded. The protein is Multifunctional CCA protein of Shewanella denitrificans (strain OS217 / ATCC BAA-1090 / DSM 15013).